The following is an 86-amino-acid chain: Protein P17 (86 aa).

The disordered stretch occupies residues 63 to 86 (SPAEKPDNQPELTGITFEGDNNDQ).

As to quaternary structure, homotetramer.

Functionally, assembly protein that acts late in phage assembly, after capsid protein folding and multimerization, and sorting of membrane proteins has occurred. The major coat protein P3 and two assembly factors (P10 and P17) are needed during the assembly of the virus particle inside the host cell, when the capsid protein multimers are capable of enclosing the host-derived membrane, containing the virus-encoded membrane-associated proteins. The sequence is that of Protein P17 (XVII) from Enterobacteria phage PRD1 (Bacteriophage PRD1).